A 138-amino-acid chain; its full sequence is Putative phosphatidylinositol 3,4,5-trisphosphate 3-phosphatase TPTE2P1 (138 aa).

A C2 tensin-type domain is found at 1–75; it reads MPAAFPCVFP…FAVEILFGMV (75 aa).

The sequence is that of Putative phosphatidylinositol 3,4,5-trisphosphate 3-phosphatase TPTE2P1 (TPTE2P1) from Homo sapiens (Human).